We begin with the raw amino-acid sequence, 282 residues long: Bis(5'-nucleosyl)-tetraphosphatase, symmetrical (282 aa).

It belongs to the Ap4A hydrolase family.

The catalysed reaction is P(1),P(4)-bis(5'-adenosyl) tetraphosphate + H2O = 2 ADP + 2 H(+). In terms of biological role, hydrolyzes diadenosine 5',5'''-P1,P4-tetraphosphate to yield ADP. The sequence is that of Bis(5'-nucleosyl)-tetraphosphatase, symmetrical from Escherichia coli O45:K1 (strain S88 / ExPEC).